An 815-amino-acid polypeptide reads, in one-letter code: Cilia- and flagella-associated protein 251 (815 aa).

10 WD repeats span residues 58–99, 103–148, 166–205, 218–257, 271–308, 379–418, 420–460, 463–502, 511–553, and 573–612; these read GHTS…PTRT, PHRH…TPPE, PAGDVQHSIRFSPNNPAELISNGRRRVYFWSWAPGSPRFQ, QSVGDFVSSVFVPGTTQALTATTDGDLVVWDEQGIAAQVG, IHNCPITLLATVGDFIVSGGEDGYVRFFDPLLRIVAWF, SLLADVVDLAAHPTRAEFAVLGRDGGLQRWDSIAHCLLGG, AFER…DLYV, NTAAGLVRVAVSNTGKHIAAADENHQLLLYAYLPYKHTMR, SHHG…VAAG, and SFAPPLAYFQAFAADTHLLVSGADGTVASWDINTAPLERS.

Identified in a spoke-associated complex containing CFAP61, CFAP91 and CFAP251; the complex is associated with the radial spokes in the axoneme. The complex associates with Calmodulin; the association is calcium sensitive.

It localises to the cytoplasm. It is found in the cytoskeleton. The protein localises to the flagellum axoneme. Functionally, as component of a spoke-associated complex, regulates flagellar dynein activity by mediating regulatory signals between the radial spokes and dynein arms. The polypeptide is Cilia- and flagella-associated protein 251 (Chlamydomonas reinhardtii (Chlamydomonas smithii)).